The primary structure comprises 609 residues: ATP-dependent lipid A-core flippase (609 aa).

The next 6 membrane-spanning stretches (helical) occupy residues 47–67, 88–108, 167–187, 190–210, 279–299, and 305–325; these read LLAAIGSIFFSAADASMIYLI, ILMLMGVGMVGLLALRSVGSF, AIITVVQDGTFVIGLIVVMFV, WQLSLFLIVVGPFLGLFISII, VIQIIASLVLAFSLFTIAIFG, and GSSWLTAGSFASFFAAAAAIL. An ABC transmembrane type-1 domain is found at 47-340; it reads LLAAIGSIFF…LTKVNVVIQK (294 aa). Residues 372-606 form the ABC transporter domain; that stretch reads VTIKDLSFAF…GGLYTRLYQS (235 aa). 404–411 is a binding site for ATP; it reads GKSGSGKT.

This sequence belongs to the ABC transporter superfamily. Lipid exporter (TC 3.A.1.106) family. As to quaternary structure, homodimer.

It localises to the cell inner membrane. It catalyses the reaction ATP + H2O + lipid A-core oligosaccharideSide 1 = ADP + phosphate + lipid A-core oligosaccharideSide 2.. In terms of biological role, involved in lipopolysaccharide (LPS) biosynthesis. Translocates lipid A-core from the inner to the outer leaflet of the inner membrane. Transmembrane domains (TMD) form a pore in the inner membrane and the ATP-binding domain (NBD) is responsible for energy generation. The polypeptide is ATP-dependent lipid A-core flippase (Francisella tularensis subsp. holarctica (strain LVS)).